A 528-amino-acid chain; its full sequence is MNNNNNNRGRFPPGIGAAGPGPDPNFQSRNPNPPQPQQYLQSRTPFPQQPQPQPPQYLQSQSDAQQYVQRGYPQQIQQQQQLQQQQQQQQQQQEQQWSRRAQLPGDPSYIDEVEKTVQSEAISDSNNEDWKATLKLPPRDNRYQTEDVTATKGNEFEDYFLKRDLLRGIYEKGFEKPSPIQEESIPIALTGSDILARAKNGTGKTGAFCIPTLEKIDPENNVIQAVILVPTRELALQTSQVCKELSKYLKIEVMVTTGGTSLRDDIMRLYQPVHLLVGTPGRILDLAKKGVCVLKDCAMLVMDEADKLLSVEFQPSIEELIQFLPESRQILMFSATFPVTVKSFKDRYLKKPYIINLMDQLTLMGVTQYYAFVEERQKVHCLNTLFSKLQINQSIIFCNSVNRVELLAKKITELGYSCFYIHAKMVQDHRNRVFHDFRNGACRNLVCTDLFTRGIDIQAVNVVINFDFPRTSESYLHRVGRSGRFGHLGLAVNLVTYEDRFKMYQTEQELGTEIKPIPSLIDKAIYCQ.

Low complexity-rich tracts occupy residues 1–15 (MNNN…PPGI) and 65–80 (QQYV…QQQQ). The interval 1–80 (MNNNNNNRGR…GYPQQIQQQQ (80 aa)) is disordered. The short motif at 154–182 (NEFEDYFLKRDLLRGIYEKGFEKPSPIQE) is the Q motif element. In terms of domain architecture, Helicase ATP-binding spans 185–355 (IPIALTGSDI…DRYLKKPYII (171 aa)). 198–205 (AKNGTGKT) contributes to the ATP binding site. A Phosphothreonine modification is found at threonine 260. Positions 303–306 (DEAD) match the DEAD box motif. The Helicase C-terminal domain occupies 365-525 (GVTQYYAFVE…PIPSLIDKAI (161 aa)).

The protein belongs to the DEAD box helicase family. DDX6/DHH1 subfamily.

Its subcellular location is the cytoplasm. It localises to the P-body. The enzyme catalyses ATP + H2O = ADP + phosphate + H(+). ATP-dependent RNA helicase involved in mRNA turnover, and more specifically in mRNA decapping. The sequence is that of DEAD-box ATP-dependent RNA helicase 6 (RH6) from Arabidopsis thaliana (Mouse-ear cress).